We begin with the raw amino-acid sequence, 702 residues long: Elongation factor G (702 aa).

Residues 8-290 (ERYRNIGISA…AVIDYLPSPV (283 aa)) form the tr-type G domain. Residues 17–24 (AHIDAGKT), 88–92 (DTPGH), and 142–145 (NKMD) each bind GTP.

It belongs to the TRAFAC class translation factor GTPase superfamily. Classic translation factor GTPase family. EF-G/EF-2 subfamily.

Its subcellular location is the cytoplasm. Its function is as follows. Catalyzes the GTP-dependent ribosomal translocation step during translation elongation. During this step, the ribosome changes from the pre-translocational (PRE) to the post-translocational (POST) state as the newly formed A-site-bound peptidyl-tRNA and P-site-bound deacylated tRNA move to the P and E sites, respectively. Catalyzes the coordinated movement of the two tRNA molecules, the mRNA and conformational changes in the ribosome. The sequence is that of Elongation factor G from Acidovorax sp. (strain JS42).